The following is a 488-amino-acid chain: Multidrug resistance outer membrane protein MdtP (488 aa).

The signal sequence occupies residues 1–23 (MINRQLSRLLLCSILGSTTLISG). Cys24 is lipidated: N-palmitoyl cysteine. Residue Cys24 is the site of S-diacylglycerol cysteine attachment.

Belongs to the outer membrane factor (OMF) (TC 1.B.17) family. Could be part of a tripartite efflux system composed of MdtN, MdtO and MdtP.

It localises to the cell outer membrane. Functionally, could be involved in resistance to puromycin, acriflavine and tetraphenylarsonium chloride. The chain is Multidrug resistance outer membrane protein MdtP (mdtP) from Escherichia coli O6:H1 (strain CFT073 / ATCC 700928 / UPEC).